The following is a 78-amino-acid chain: Hainantoxin-XX.3 (78 aa).

A signal peptide spans 1–23 (MKSATLLALSFLLIASCFLICEA). A propeptide spanning residues 24-47 (EHSRYEEHEILEENMGDVVNLEQR) is cleaved from the precursor. 3 cysteine pairs are disulfide-bonded: Cys49/Cys62, Cys56/Cys66, and Cys61/Cys77.

The protein belongs to the hainantoxin family. 20 subfamily. In terms of tissue distribution, expressed by the venom gland.

It is found in the secreted. Functionally, putative ion channel inhibitor. The chain is Hainantoxin-XX.3 from Cyriopagopus hainanus (Chinese bird spider).